Here is a 244-residue protein sequence, read N- to C-terminus: Transcriptional regulatory protein AruR (244 aa).

Residues 6–124 (RVLVVDDDPV…ELVSRAKNLI (119 aa)) form the Response regulatory domain. Residue D60 is modified to 4-aspartylphosphate. Positions 139–239 (QALRQFGDWL…IHGAGYLFTA (101 aa)) form a DNA-binding region, ompR/PhoB-type.

Post-translationally, phosphorylated by AruS.

The protein resides in the cytoplasm. Its pathway is amino-acid degradation; L-arginine degradation [regulation]. Member of the two-component regulatory system AruS/AruR, which is involved in the regulation of the arginine transaminase (ATA) pathway in response to exogeneous L-arginine. Regulates transcription of aruH and aruI. This Pseudomonas aeruginosa (strain ATCC 15692 / DSM 22644 / CIP 104116 / JCM 14847 / LMG 12228 / 1C / PRS 101 / PAO1) protein is Transcriptional regulatory protein AruR (aruR).